The sequence spans 413 residues: Type IV pilus assembly protein TapC (413 aa).

Helical transmembrane passes span 180-200, 227-247, 286-306, and 386-406; these read YPAMVILVAIVVTSILLLFVI, FMQHWWYVIFGGTAFAIFLYV, LSTTFSAGIPLVDALISAAGA, and IMVVLGVLVGGMVVAMYLPIF.

This sequence belongs to the GSP F family.

It localises to the cell inner membrane. Its function is as follows. Involved in the translocation of the type IV pilin. This Aeromonas hydrophila protein is Type IV pilus assembly protein TapC (tapC).